Reading from the N-terminus, the 754-residue chain is 5-methyltetrahydropteroyltriglutamate--homocysteine methyltransferase (754 aa).

Residues 15–18 (RELK) and Lys114 contribute to the 5-methyltetrahydropteroyltri-L-glutamate site. L-homocysteine is bound by residues 430–432 (IGS) and Glu483. Residues 430–432 (IGS) and Glu483 contribute to the L-methionine site. Residues 514–515 (RC) and Trp560 contribute to the 5-methyltetrahydropteroyltri-L-glutamate site. Asp598 contacts L-homocysteine. Asp598 contacts L-methionine. Glu604 provides a ligand contact to 5-methyltetrahydropteroyltri-L-glutamate. Zn(2+) contacts are provided by His641, Cys643, and Glu665. Catalysis depends on His694, which acts as the Proton donor. Cys726 is a Zn(2+) binding site.

It belongs to the vitamin-B12 independent methionine synthase family. Zn(2+) serves as cofactor.

It carries out the reaction 5-methyltetrahydropteroyltri-L-glutamate + L-homocysteine = tetrahydropteroyltri-L-glutamate + L-methionine. Its pathway is amino-acid biosynthesis; L-methionine biosynthesis via de novo pathway; L-methionine from L-homocysteine (MetE route): step 1/1. Functionally, catalyzes the transfer of a methyl group from 5-methyltetrahydrofolate to homocysteine resulting in methionine formation. This chain is 5-methyltetrahydropteroyltriglutamate--homocysteine methyltransferase, found in Campylobacter jejuni subsp. jejuni serotype O:6 (strain 81116 / NCTC 11828).